The sequence spans 269 residues: Phycobilisome 37.5 kDa linker polypeptide, phycocyanin-associated, rod (269 aa).

The region spanning 2-177 (TSSTAARQLG…IYRGYANSDR (176 aa)) is the PBS-linker domain. The region spanning 217–269 (GQLYRVRVIQADRGRTTQIRRSIQEYLVSYDQLSPTLQRLNQRGSRVVNISPA) is the CpcD-like domain.

Belongs to the phycobilisome linker protein family.

It is found in the cellular thylakoid membrane. Its function is as follows. Rod linker protein, associated with phycocyanin. Linker polypeptides determine the state of aggregation and the location of the disk-shaped phycobiliprotein units within the phycobilisome and modulate their spectroscopic properties in order to mediate a directed and optimal energy transfer. The polypeptide is Phycobilisome 37.5 kDa linker polypeptide, phycocyanin-associated, rod (cpcH2) (Microchaete diplosiphon (Fremyella diplosiphon)).